A 619-amino-acid polypeptide reads, in one-letter code: Very-long-chain aldehyde decarbonylase GL1-4 (619 aa).

5 helical membrane-spanning segments follow: residues 45–65, 94–114, 126–146, 178–198, and 325–345; these read IAFSLILPSLLLRMIHNQIWI, GWDDQILFNGLVFYAGYLAMP, GAVVTALVHTGPVEFLYYWFH, FAEHVVYFILFAIPILSTIYL, and AWYMWTLWPLAWLSMVLAWIY. The region spanning 138–272 is the Fatty acid hydroxylase domain; that stretch reads VEFLYYWFHR…MPFYDYIYNT (135 aa).

This sequence belongs to the sterol desaturase family. In terms of assembly, homodimer.

It is found in the endoplasmic reticulum membrane. The enzyme catalyses a long-chain fatty aldehyde + 2 NADPH + O2 + H(+) = a long-chain alkane + formate + 2 NADP(+) + H2O. Functionally, aldehyde decarbonylase involved in the conversion of aldehydes to alkanes. Core component of a very-long-chain alkane synthesis complex. In Oryza sativa subsp. indica (Rice), this protein is Very-long-chain aldehyde decarbonylase GL1-4.